A 583-amino-acid chain; its full sequence is 2-succinyl-5-enolpyruvyl-6-hydroxy-3-cyclohexene-1-carboxylate synthase (583 aa).

This sequence belongs to the TPP enzyme family. MenD subfamily. In terms of assembly, homodimer. It depends on Mg(2+) as a cofactor. Requires Mn(2+) as cofactor. Thiamine diphosphate serves as cofactor.

The enzyme catalyses isochorismate + 2-oxoglutarate + H(+) = 5-enolpyruvoyl-6-hydroxy-2-succinyl-cyclohex-3-ene-1-carboxylate + CO2. The protein operates within quinol/quinone metabolism; 1,4-dihydroxy-2-naphthoate biosynthesis; 1,4-dihydroxy-2-naphthoate from chorismate: step 2/7. It functions in the pathway quinol/quinone metabolism; menaquinone biosynthesis. Its function is as follows. Catalyzes the thiamine diphosphate-dependent decarboxylation of 2-oxoglutarate and the subsequent addition of the resulting succinic semialdehyde-thiamine pyrophosphate anion to isochorismate to yield 2-succinyl-5-enolpyruvyl-6-hydroxy-3-cyclohexene-1-carboxylate (SEPHCHC). The polypeptide is 2-succinyl-5-enolpyruvyl-6-hydroxy-3-cyclohexene-1-carboxylate synthase (Chlorobium phaeovibrioides (strain DSM 265 / 1930) (Prosthecochloris vibrioformis (strain DSM 265))).